We begin with the raw amino-acid sequence, 765 residues long: Phosphoribosylformylglycinamidine synthase subunit PurL (765 aa).

The active site involves histidine 41. Residues tyrosine 44 and lysine 83 each contribute to the ATP site. Residue glutamate 85 coordinates Mg(2+). Substrate contacts are provided by residues serine 86 to histidine 89 and arginine 108. Residue histidine 87 is the Proton acceptor of the active site. Residue aspartate 109 coordinates Mg(2+). Residue glutamine 232 participates in substrate binding. Residue aspartate 260 participates in Mg(2+) binding. Glutamate 304–glutamine 306 serves as a coordination point for substrate. ATP-binding residues include aspartate 503 and glycine 540. Mg(2+) is bound at residue asparagine 541. Position 543 (serine 543) interacts with substrate.

Belongs to the FGAMS family. Monomer. Part of the FGAM synthase complex composed of 1 PurL, 1 PurQ and 2 PurS subunits.

Its subcellular location is the cytoplasm. It carries out the reaction N(2)-formyl-N(1)-(5-phospho-beta-D-ribosyl)glycinamide + L-glutamine + ATP + H2O = 2-formamido-N(1)-(5-O-phospho-beta-D-ribosyl)acetamidine + L-glutamate + ADP + phosphate + H(+). It participates in purine metabolism; IMP biosynthesis via de novo pathway; 5-amino-1-(5-phospho-D-ribosyl)imidazole from N(2)-formyl-N(1)-(5-phospho-D-ribosyl)glycinamide: step 1/2. Functionally, part of the phosphoribosylformylglycinamidine synthase complex involved in the purines biosynthetic pathway. Catalyzes the ATP-dependent conversion of formylglycinamide ribonucleotide (FGAR) and glutamine to yield formylglycinamidine ribonucleotide (FGAM) and glutamate. The FGAM synthase complex is composed of three subunits. PurQ produces an ammonia molecule by converting glutamine to glutamate. PurL transfers the ammonia molecule to FGAR to form FGAM in an ATP-dependent manner. PurS interacts with PurQ and PurL and is thought to assist in the transfer of the ammonia molecule from PurQ to PurL. The protein is Phosphoribosylformylglycinamidine synthase subunit PurL of Synechococcus sp. (strain WH7803).